The primary structure comprises 476 residues: Glutamate--tRNA ligase (476 aa).

The 'HIGH' region signature appears at 9-19 (PSPTGTLHIGT). The 'KMSKS' region signature appears at 248-252 (KLSKR). Lys-251 provides a ligand contact to ATP.

Belongs to the class-I aminoacyl-tRNA synthetase family. Glutamate--tRNA ligase type 1 subfamily. In terms of assembly, monomer.

It localises to the cytoplasm. It carries out the reaction tRNA(Glu) + L-glutamate + ATP = L-glutamyl-tRNA(Glu) + AMP + diphosphate. Catalyzes the attachment of glutamate to tRNA(Glu) in a two-step reaction: glutamate is first activated by ATP to form Glu-AMP and then transferred to the acceptor end of tRNA(Glu). In Prochlorococcus marinus (strain MIT 9313), this protein is Glutamate--tRNA ligase.